A 270-amino-acid chain; its full sequence is Shikimate dehydrogenase (NADP(+)) (270 aa).

Shikimate-binding positions include 14–16 (SLS) and threonine 61. Lysine 65 (proton acceptor) is an active-site residue. Position 77 (aspartate 77) interacts with NADP(+). Asparagine 86 and aspartate 101 together coordinate shikimate. NADP(+) is bound by residues 125-129 (GNGGA) and isoleucine 210. Tyrosine 212 is a shikimate binding site. Glycine 233 provides a ligand contact to NADP(+).

This sequence belongs to the shikimate dehydrogenase family. As to quaternary structure, homodimer.

The catalysed reaction is shikimate + NADP(+) = 3-dehydroshikimate + NADPH + H(+). The protein operates within metabolic intermediate biosynthesis; chorismate biosynthesis; chorismate from D-erythrose 4-phosphate and phosphoenolpyruvate: step 4/7. In terms of biological role, involved in the biosynthesis of the chorismate, which leads to the biosynthesis of aromatic amino acids. Catalyzes the reversible NADPH linked reduction of 3-dehydroshikimate (DHSA) to yield shikimate (SA). This is Shikimate dehydrogenase (NADP(+)) from Clostridium beijerinckii (strain ATCC 51743 / NCIMB 8052) (Clostridium acetobutylicum).